Reading from the N-terminus, the 448-residue chain is MPSAVDYSELGGSLPAIASLNASYSQASLSLPSPYYCPLPPGERKAFSDVRRTFCLFVTFDLLFITLLWIIELNISKSIWNSLENEVVHYNFKSSFFDIFLLAVFRFLCLQLGYAAFRLRHWWVIAITTLVTTAFLIAKVILSDLFSQNAFGYVLPITSFVVAWLETWFLDFKVLTQEAEDERVYLAAVNAACEPAPLICPRPVSDGQFYSPPESLAGSEDDLDEEGLGRRAVTEQEKAFVRQGREAMAVVEQILTQEENWKFEKTNELGDAVYTLEIPFHGKTFILKGLLQCTAELVYQEVILQPEKMVQWNRTVSVCQILQRVDDNTMVSYDVSAGAAGGVVSPRDFVNVRRVERRRDCYISAGMATNHNSKPHHSRYVRGENGPGGFVVLKSSSNPSVCTFIWVLNTDLKGRLPRYLIHQSLAATMFEFMSHLRQRINEVHVSYR.

Residues 47–219 (FSDVRRTFCL…YSPPESLAGS (173 aa)) enclose the MENTAL domain. 4 helical membrane-spanning segments follow: residues 53–73 (TFCL…IIEL), 96–116 (FFDI…GYAA), 122–142 (WWVI…KVIL), and 150–170 (AFGY…TWFL). The FFAT motif lies at 208-214 (QFYSPPE). An START domain is found at 232-445 (AVTEQEKAFV…LRQRINEVHV (214 aa)).

Belongs to the STARD3 family. As to quaternary structure, homodimer. Phosphorylated. Phosphorylation allows the tethering of two membranes that participates in the formation of ER-endosome contacts. Phosphorylation of FFAT motif drives membrane tethering between the endoplasmic reticulum and late endosomes that in turn allows the efficient transport of sterol mediated by the START domain.

The protein localises to the late endosome membrane. The catalysed reaction is cholesterol(in) = cholesterol(out). Functionally, sterol-binding protein that mediates cholesterol transport from the endoplasmic reticulum to endosomes. The sterol transport mechanism is triggered by phosphorylation of FFAT motif that leads to membrane tethering between the endoplasmic reticulum and late endosomes. Acts as a lipid transfer protein that redirects sterol to the endosome at the expense of the cell membrane and favors membrane formation inside endosomes. This is StAR-related lipid transfer protein 3 from Danio rerio (Zebrafish).